The sequence spans 767 residues: AMP deaminase 3 (767 aa).

2 positions are modified to phosphoserine: S85 and S107. Disordered stretches follow at residues 89–111 (QMPP…PTTP) and 181–205 (LGHP…PLPQ). Residues H317 and H319 each coordinate Zn(2+). Substrate is bound by residues H319 and 388–393 (KFNSKY). Residue H586 coordinates Zn(2+). E589 lines the substrate pocket. The Proton acceptor role is filled by H608. D663 provides a ligand contact to Zn(2+). Residue 664 to 667 (DPMQ) coordinates substrate.

The protein belongs to the metallo-dependent hydrolases superfamily. Adenosine and AMP deaminases family. Homotetramer. The cofactor is Zn(2+).

It carries out the reaction AMP + H2O + H(+) = IMP + NH4(+). The protein operates within purine metabolism; IMP biosynthesis via salvage pathway; IMP from AMP: step 1/1. Functionally, AMP deaminase plays a critical role in energy metabolism. This is AMP deaminase 3 from Homo sapiens (Human).